The primary structure comprises 382 residues: Carbamoyl phosphate synthase small chain (382 aa).

Positions 1 to 189 are CPSase; that stretch reads MIKSALLVLE…GLPEAKKEDE (189 aa). The L-glutamine site is built by serine 47, glycine 241, and glycine 243. The Glutamine amidotransferase type-1 domain occupies 193–380; it reads HVVAYDFGAK…IALIEQYRKT (188 aa). Cysteine 269 (nucleophile) is an active-site residue. The L-glutamine site is built by leucine 270, glutamine 273, asparagine 311, glycine 313, and phenylalanine 314. Residues histidine 353 and glutamate 355 contribute to the active site.

It belongs to the CarA family. Composed of two chains; the small (or glutamine) chain promotes the hydrolysis of glutamine to ammonia, which is used by the large (or ammonia) chain to synthesize carbamoyl phosphate. Tetramer of heterodimers (alpha,beta)4.

It catalyses the reaction hydrogencarbonate + L-glutamine + 2 ATP + H2O = carbamoyl phosphate + L-glutamate + 2 ADP + phosphate + 2 H(+). It carries out the reaction L-glutamine + H2O = L-glutamate + NH4(+). Its pathway is amino-acid biosynthesis; L-arginine biosynthesis; carbamoyl phosphate from bicarbonate: step 1/1. The protein operates within pyrimidine metabolism; UMP biosynthesis via de novo pathway; (S)-dihydroorotate from bicarbonate: step 1/3. Functionally, small subunit of the glutamine-dependent carbamoyl phosphate synthetase (CPSase). CPSase catalyzes the formation of carbamoyl phosphate from the ammonia moiety of glutamine, carbonate, and phosphate donated by ATP, constituting the first step of 2 biosynthetic pathways, one leading to arginine and/or urea and the other to pyrimidine nucleotides. The small subunit (glutamine amidotransferase) binds and cleaves glutamine to supply the large subunit with the substrate ammonia. This chain is Carbamoyl phosphate synthase small chain, found in Escherichia coli O6:H1 (strain CFT073 / ATCC 700928 / UPEC).